Here is an 88-residue protein sequence, read N- to C-terminus: UPF0297 protein STER_1937 (88 aa).

Belongs to the UPF0297 family.

The sequence is that of UPF0297 protein STER_1937 from Streptococcus thermophilus (strain ATCC BAA-491 / LMD-9).